A 283-amino-acid polypeptide reads, in one-letter code: uncharacterized protein (283 aa).

The first 23 residues, 1–23, serve as a signal peptide directing secretion; sequence MFAFASFAISAIFFLCSFSYVSS.

Its subcellular location is the secreted. This is an uncharacterized protein from Schizosaccharomyces pombe (strain 972 / ATCC 24843) (Fission yeast).